A 446-amino-acid polypeptide reads, in one-letter code: Tryptophan dimethylallyltransferase (446 aa).

Residues 83–84 (IL) and Glu92 each bind L-tryptophan. Residues Arg103, Lys189, and Tyr191 each coordinate substrate. L-tryptophan-binding residues include Tyr193 and Arg246. Residues Arg259, Lys261, Tyr263, Gln345, and Tyr347 each contribute to the substrate site.

It belongs to the tryptophan dimethylallyltransferase family. As to quaternary structure, homodimer.

It carries out the reaction L-tryptophan + dimethylallyl diphosphate = 4-(3-methylbut-2-enyl)-L-tryptophan + diphosphate. The protein operates within alkaloid biosynthesis; ergot alkaloid biosynthesis. Tryptophan dimethylallyltransferase; part of the gene cluster that mediates the biosynthesis of fungal ergot alkaloid. DmaW catalyzes the first step of ergot alkaloid biosynthesis by condensing dimethylallyl diphosphate (DMAP) and tryptophan to form 4-dimethylallyl-L-tryptophan. The second step is catalyzed by the methyltransferase easF that methylates 4-dimethylallyl-L-tryptophan in the presence of S-adenosyl-L-methionine, resulting in the formation of 4-dimethylallyl-L-abrine. The catalase easC and the FAD-dependent oxidoreductase easE then transform 4-dimethylallyl-L-abrine to chanoclavine-I which is further oxidized by easD in the presence of NAD(+), resulting in the formation of chanoclavine-I aldehyde. Chanoclavine-I aldehyde is the precursor of ergoamides and ergopeptines in Clavicipitaceae, and clavine-type alcaloids such as fumiclavine in Trichocomaceae. However, the metabolites downstream of chanoclavine-I aldehyde in Arthrodermataceae have not been identified yet. The polypeptide is Tryptophan dimethylallyltransferase (Arthroderma otae (strain ATCC MYA-4605 / CBS 113480) (Microsporum canis)).